Here is a 338-residue protein sequence, read N- to C-terminus: Phosphoribosylformylglycinamidine cyclo-ligase (338 aa).

This sequence belongs to the AIR synthase family.

Its subcellular location is the cytoplasm. It catalyses the reaction 2-formamido-N(1)-(5-O-phospho-beta-D-ribosyl)acetamidine + ATP = 5-amino-1-(5-phospho-beta-D-ribosyl)imidazole + ADP + phosphate + H(+). It functions in the pathway purine metabolism; IMP biosynthesis via de novo pathway; 5-amino-1-(5-phospho-D-ribosyl)imidazole from N(2)-formyl-N(1)-(5-phospho-D-ribosyl)glycinamide: step 2/2. This chain is Phosphoribosylformylglycinamidine cyclo-ligase, found in Lactococcus lactis subsp. lactis (strain IL1403) (Streptococcus lactis).